Consider the following 249-residue polypeptide: 5'-nucleotidase SurE (249 aa).

A divalent metal cation-binding residues include Asp8, Asp9, Ser39, and Asn91.

The protein belongs to the SurE nucleotidase family. The cofactor is a divalent metal cation.

It is found in the cytoplasm. The enzyme catalyses a ribonucleoside 5'-phosphate + H2O = a ribonucleoside + phosphate. In terms of biological role, nucleotidase that shows phosphatase activity on nucleoside 5'-monophosphates. The polypeptide is 5'-nucleotidase SurE (Pseudomonas fluorescens (strain Pf0-1)).